A 470-amino-acid chain; its full sequence is Choline/ethanolamine transporter flvcr2a (470 aa).

Residues 1–23 (MCDKADNHIDVQPEGNLEVSSVS) are Cytoplasmic-facing. The helical transmembrane segment at 24 to 48 (STRLYRRRWVILLLFSSYSLCNAFQ) threads the bilayer. The choline site is built by Asn-45, Ala-46, and Trp-49. Over 49 to 66 (WIQYGIINNIFMKFYQVS) the chain is Extracellular. The chain crosses the membrane as a helical span at residues 67–94 (SFAVDWLSMVYMLTYIPFIFPVTWLLER). Residues 95–96 (KG) are Cytoplasmic-facing. Residues 97-116 (LRVVALLAASINCAGTWIKV) form a helical membrane-spanning segment. At 117 to 123 (ASVQPSL) the chain is on the extracellular side. Residues 124 to 152 (FWVTMLGQFACSCAQVFILGMPSQVASVW) traverse the membrane as a helical segment. Residues Gln-138 and Leu-142 each coordinate choline. The Cytoplasmic segment spans residues 153–157 (FGSDE). The helical transmembrane segment at 158-183 (VSTACAIGVFGNQLGIAIGFLVPPVL) threads the bilayer. The Extracellular portion of the chain corresponds to 184–188 (VPNVE). A helical transmembrane segment spans residues 189–218 (DMGELAEHISIMFYITAAVATLIFLLVVFV). The Cytoplasmic portion of the chain corresponds to 219 to 254 (FQEKPETPPSLAQVALRNMPTGQHSYLASIARLMCN). A helical membrane pass occupies residues 255 to 285 (KPFILLLISYGLNVGSFYAVSTLLNRMIIEH). Residue Tyr-272 participates in choline binding. Residues 286–289 (YPGE) lie on the Extracellular side of the membrane. The helical transmembrane segment at 290–318 (EVNAGRIGLTLVVAGVVGSLICGVWLDKT) threads the bilayer. The Cytoplasmic portion of the chain corresponds to 319–320 (KT). The helical transmembrane segment at 321-343 (YKQTTLSVYLLSFVGMLIYSFTL) threads the bilayer. Over 344 to 346 (NLG) the chain is Extracellular. A helical transmembrane segment spans residues 347 to 376 (HLWLVFLTSGVLGFFMTGYLPLGFEFAVEL). Topologically, residues 377–384 (TYPESEGT) are cytoplasmic. A helical transmembrane segment spans residues 385–410 (SSGLLNCSAQVFGIAFTIIQGKIIDH). Residue Gln-394 coordinates choline. Over 411–412 (FG) the chain is Extracellular. A helical membrane pass occupies residues 413-435 (TLAGNIFLCVFLLIGSIMTAFIK). Topologically, residues 436–470 (SDLRRQKANQETGGNADSSVHPQHGETLPVKEVKM) are cytoplasmic. Positions 445 to 456 (QETGGNADSSVH) are enriched in polar residues. The tract at residues 445–470 (QETGGNADSSVHPQHGETLPVKEVKM) is disordered.

Belongs to the major facilitator superfamily. Feline leukemia virus subgroup C receptor (TC 2.A.1.28.1) family.

The protein localises to the cell membrane. The protein resides in the mitochondrion membrane. Its subcellular location is the endoplasmic reticulum membrane. It catalyses the reaction choline(out) = choline(in). It carries out the reaction ethanolamine(in) = ethanolamine(out). The enzyme catalyses heme b(in) = heme b(out). Functionally, choline uniporter that specifically mediates choline uptake at the blood-brain-barrier. Responsible for the majority of choline uptake across the blood-brain-barrier from the circulation into the brain. Choline, a nutrient critical for brain development, is a precursor of phosphatidylcholine, as well as betaine. Also mediates transport of ethanolamine. Choline and ethanolamine transport is not coupled with proton transport and is exclusively driven by the choline gradient across the plasma membrane. Also acts as a heme b transporter. In Danio rerio (Zebrafish), this protein is Choline/ethanolamine transporter flvcr2a.